An 843-amino-acid polypeptide reads, in one-letter code: Potassium transporter 10 (843 aa).

The span at 1-15 (MKSPSPVDPESPSSP) shows a compositional bias: low complexity. The segment at 1–25 (MKSPSPVDPESPSSPDCKGGSSSKR) is disordered. The Cytoplasmic segment spans residues 1-34 (MKSPSPVDPESPSSPDCKGGSSSKRRRLPWRMTM). A helical membrane pass occupies residues 35-55 (SLAYQSLGVVYGDLSTSPLYV). Residues 56 to 72 (YKAAFAEDIQHSETNEE) are Vacuolar-facing. A helical transmembrane segment spans residues 73-93 (ILGVLSFVFWTLTLVPLLKYV). Over 94–183 (CVVLRADDNG…LLERHKVLQR (90 aa)) the chain is Cytoplasmic. A helical transmembrane segment spans residues 184–204 (VLLVLALVGTCMVIGDGVLTP). The Vacuolar segment spans residues 205 to 225 (AISVFSAVSGLELSMEKHQHK). A helical transmembrane segment spans residues 226–246 (YVEVPIACFVLVCLFCLQHYG). Residues 247 to 249 (THR) are Cytoplasmic-facing. Residues 250–270 (VGFLFAPIVITWLLCISMIGV) traverse the membrane as a helical segment. The Vacuolar segment spans residues 271–298 (YNIVHWEPNVYRALSPYYMYKFLKKTQR). A helical transmembrane segment spans residues 299 to 319 (GGWMSLGGILLCITGSEAMFA). Residues 320-326 (DLGHFNQ) are Cytoplasmic-facing. Residues 327-347 (LSIQIAFTCMVYPSLILAYMG) form a helical membrane-spanning segment. Residues 348 to 377 (QAAYLCKHHIIESDYRIGFYVSVPEKIRWP) lie on the Vacuolar side of the membrane. A helical membrane pass occupies residues 378 to 398 (VLAIAILAAVVGSQAVITGTF). The Cytoplasmic segment spans residues 399-425 (SMIKQCTALGCFPRVKIVHTSDKVHGQ). A helical transmembrane segment spans residues 426–446 (IYIPEINWILMILCLAITIGF). The Vacuolar segment spans residues 447–451 (RDTKH). The helical transmembrane segment at 452–472 (LGNASGLAVITVMLVTTCLMS) threads the bilayer. The Cytoplasmic portion of the chain corresponds to 473–482 (LVIVLCWHKS). The chain crosses the membrane as a helical span at residues 483-505 (IFLAFGFIIFFGTIEALYFSASL). At 506–510 (IKFRE) the chain is on the vacuolar side. The chain crosses the membrane as a helical span at residues 511–531 (GAWVPIVLAFIFMAIMCIWHY). At 532–843 (GTIKKYEFDL…TLEVGMIYYV (312 aa)) the chain is on the cytoplasmic side. Residues 667–747 (AASSKPKNVC…IMSPSPSPPP (81 aa)) form a disordered region. The span at 718–735 (GGSGSGSGRGSSRGGGGA) shows a compositional bias: gly residues.

It belongs to the HAK/KUP transporter (TC 2.A.72.3) family. Expressed in roots, shoots, and panicle at flowering stage.

It is found in the vacuole membrane. High-affinity potassium transporter. This Oryza sativa subsp. japonica (Rice) protein is Potassium transporter 10 (HAK10).